The sequence spans 92 residues: Small ribosomal subunit protein bS20 (92 aa).

It belongs to the bacterial ribosomal protein bS20 family.

Its function is as follows. Binds directly to 16S ribosomal RNA. The protein is Small ribosomal subunit protein bS20 of Rickettsia conorii (strain ATCC VR-613 / Malish 7).